A 327-amino-acid chain; its full sequence is CREB homolog crh-1 (327 aa).

The KID domain occupies 16–75; that stretch reads SPLMMLLFKALQEGGDSEDEARRRREQLNRRPSYRMILKDLETADKVMKKEPEETPPSSV. Disordered stretches follow at residues 27–114 and 151–200; these read QEGG…SPYG and KVFP…VQSL. A compositionally biased stretch (basic and acidic residues) spans 35–44; the sequence is EARRRREQLN. Ser48 is modified (phosphoserine). The segment covering 52–68 has biased composition (basic and acidic residues); the sequence is ILKDLETADKVMKKEPE. Polar residues predominate over residues 71–84; sequence PPSSVDASPLQFQS. The segment covering 161–172 has biased composition (gly residues); it reads GLGGGGGGGGVP. The span at 173–199 shows a compositional bias: low complexity; sequence GPSSGIAGMSVQPPTSSTPSQQQSVQS. The 52-residue stretch at 266 to 317 folds into the bZIP domain; the sequence is NRKRQVRLLKNREAAKECRRKKKEYVKCLENRVSVLENQNKALIEELKTLKE. Residues 267–292 are basic motif; the sequence is RKRQVRLLKNREAAKECRRKKKEYVK. Residues 284–318 adopt a coiled-coil conformation; sequence RRKKKEYVKCLENRVSVLENQNKALIEELKTLKEL. Residues 294–315 form a leucine-zipper region; it reads LENRVSVLENQNKALIEELKTL.

The protein belongs to the bZIP family. As to quaternary structure, interacts with CREB-regulated transcription coactivator homolog crtc-1. Post-translationally, transcriptional activity is enhanced by phosphorylation. Phosphorylated by cmk-1. In terms of tissue distribution, expressed widely, including in head neurons AFD, gustatory neurons ASE, the olfactory neurons AWC, and in the ASI sensory neurons, as well as in the intestine and gonads in hermaphrodites.

The protein localises to the nucleus. In terms of biological role, transcription factor. Transcriptional activity probably positively regulated by phosphorylation. Modulates expression of target genes, acting by binding to regulatory cAMP response elements (CRE). Acts downstream of the calcium-triggered CaMKK-CaMK1 signaling cascade, consisting of the protein kinase kinase ckk-1 and the protein kinase cmk-1. Plays a role in learning and memory, feeding behavior, stress response, entry into the dauer stage and modulation of lifespan. Involved in commitment to the developmentally arrested larval state known as dauer, acting by positively regulating the expression of dauer-inhibiting TGF-beta-like daf-7 in the ASI neurons. Plays a role in both associative and non-associative long-term memory (LTM). Involved in modulating feeding behavior, acting by regulating transcription of tryptophan hydroxylase tph-1 in serotonergic ADF neurons. Regulates transcription of genes involved in endoplasmic reticulum (ER) stress. Involved in modulation of lifespan, in response to raised temperature, but independently of the heat-shock response pathway, acting by regulating transcription of FMRFamide-like neuropeptides flp-6 in the AFD neuron. Its function is as follows. Plays a role in associative long-term memory (LTM) and learning. Plays a role in associative long-term memory (LTM) and learning; perhaps required at the time of acquisition and/or the consolidation phase of memory formation. This is CREB homolog crh-1 from Caenorhabditis elegans.